The primary structure comprises 60 residues: UPF0434 protein Bpro_2950 (60 aa).

This sequence belongs to the UPF0434 family.

This is UPF0434 protein Bpro_2950 from Polaromonas sp. (strain JS666 / ATCC BAA-500).